Reading from the N-terminus, the 361-residue chain is Peptide chain release factor 1 (361 aa).

At Gln236 the chain carries N5-methylglutamine. Residues 285-309 (TAKDSARAADRKAQVGSGDRSERIR) show a composition bias toward basic and acidic residues. A disordered region spans residues 285–313 (TAKDSARAADRKAQVGSGDRSERIRTYNF).

This sequence belongs to the prokaryotic/mitochondrial release factor family. Methylated by PrmC. Methylation increases the termination efficiency of RF1.

The protein localises to the cytoplasm. Functionally, peptide chain release factor 1 directs the termination of translation in response to the peptide chain termination codons UAG and UAA. This Methylorubrum populi (strain ATCC BAA-705 / NCIMB 13946 / BJ001) (Methylobacterium populi) protein is Peptide chain release factor 1.